The sequence spans 272 residues: Transcription factor E2F6 (272 aa).

Residues Met1 to Pro62 form a binding to corepressors region. The DNA-binding element occupies Tyr50–Ser129. The short motif at Lys95 to Ser129 is the DEF box element. The interval Asp130–Val222 is dimerization. The segment at Leu143–Cys164 is leucine-zipper. The segment at Asp173–Gln272 is transcription repression. The interval His242–Gln272 is disordered.

Belongs to the E2F/DP family. In terms of assembly, forms heterodimers with DP family members TFDP1 or TFDP2. Component of the DRTF1/E2F transcription factor complex. Part of the E2F6.com-1 complex in G0 phase composed of E2F6, MGA, MAX, TFDP1, CBX3, BAT8, EUHMTASE1, RING1, RNF2, MBLR, L3MBTL2 and YAF2. Component of some MLL1/MLL complex, at least composed of the core components KMT2A/MLL1, ASH2L, HCFC1/HCF1, WDR5 and RBBP5, as well as the facultative components BACC1, CHD8, E2F6, HSP70, INO80C, KANSL1, LAS1L, MAX, MCRS1, MGA, KAT8/MOF, PELP1, PHF20, PRP31, RING2, RUVB1/TIP49A, RUVB2/TIP49B, SENP3, TAF1, TAF4, TAF6, TAF7, TAF9 and TEX10.

Its subcellular location is the nucleus. Its function is as follows. Inhibitor of E2F-dependent transcription. Binds DNA cooperatively with DP proteins through the E2 recognition site, 5'-TTTC[CG]CGC-3'. Has a preference for the 5'-TTTCCCGC-3' E2F recognition site. E2F6 lacks the transcriptional activation and pocket protein binding domains. Appears to regulate a subset of E2F-dependent genes whose products are required for entry into the cell cycle but not for normal cell cycle progression. Represses expression of some meiosis-specific genes, including SLC25A31/ANT4. May silence expression via the recruitment of a chromatin remodeling complex containing histone H3-K9 methyltransferase activity. Overexpression delays the exit of cells from the S-phase. In Mus musculus (Mouse), this protein is Transcription factor E2F6.